The sequence spans 192 residues: Protein CREG1 (192 aa).

An N-terminal signal peptide occupies residues 1-18; the sequence is MVLLAFLCAAALAALARG. Residues N95, N133, and N166 are each glycosylated (N-linked (GlcNAc...) asparagine).

It belongs to the CREG family.

Its subcellular location is the secreted. Its function is as follows. May contribute to the transcriptional control of cell growth and differentiation. The sequence is that of Protein CREG1 (CREG1) from Gallus gallus (Chicken).